The primary structure comprises 744 residues: Photosystem I P700 chlorophyll a apoprotein A2 (744 aa).

Helical transmembrane passes span 48–71, 137–160, 177–201, 275–293, 337–360, 376–402, 424–446, and 527–545; these read LFAT…FHIA, LYAG…LHLQ, LNHH…HVAI, MAHH…GHMY, LHFQ…QHMY, AALY…IFLV, AIIS…LYVH, and FLVH…LILV. [4Fe-4S] cluster is bound by residues Cys-569 and Cys-578. The next 2 helical transmembrane spans lie at 585–606 and 653–675; these read AFYL…YWHW and LAVW…MFLI. Chlorophyll a contacts are provided by His-664, Met-672, and Tyr-680. Phylloquinone is bound at residue Trp-681. Residues 717-737 traverse the membrane as a helical segment; it reads LVGLAHFTVGYVLTYAAFVIA.

The protein belongs to the PsaA/PsaB family. In terms of assembly, the PsaA/B heterodimer binds the P700 chlorophyll special pair and subsequent electron acceptors. PSI consists of a core antenna complex that captures photons, and an electron transfer chain that converts photonic excitation into a charge separation. The cyanobacterial PSI reaction center is composed of one copy each of PsaA,B,C,D,E,F,I,J,K,L,M and X, and forms trimeric complexes. It depends on PSI electron transfer chain: 5 chlorophyll a, 1 chlorophyll a', 2 phylloquinones and 3 4Fe-4S clusters. PSI core antenna: 90 chlorophyll a, 22 carotenoids, 3 phospholipids and 1 galactolipid. P700 is a chlorophyll a/chlorophyll a' dimer, A0 is one or more chlorophyll a, A1 is one or both phylloquinones and FX is a shared 4Fe-4S iron-sulfur center. as a cofactor.

Its subcellular location is the cellular thylakoid membrane. It carries out the reaction reduced [plastocyanin] + hnu + oxidized [2Fe-2S]-[ferredoxin] = oxidized [plastocyanin] + reduced [2Fe-2S]-[ferredoxin]. In terms of biological role, psaA and PsaB bind P700, the primary electron donor of photosystem I (PSI), as well as the electron acceptors A0, A1 and FX. PSI is a plastocyanin/cytochrome c6-ferredoxin oxidoreductase, converting photonic excitation into a charge separation, which transfers an electron from the donor P700 chlorophyll pair to the spectroscopically characterized acceptors A0, A1, FX, FA and FB in turn. Oxidized P700 is reduced on the lumenal side of the thylakoid membrane by plastocyanin or cytochrome c6. The protein is Photosystem I P700 chlorophyll a apoprotein A2 of Synechococcus sp. (strain JA-2-3B'a(2-13)) (Cyanobacteria bacterium Yellowstone B-Prime).